Consider the following 379-residue polypeptide: MSDQTFDAPVWHHGKALRKGYTTGSCATAAAKVAALMVMRQHLIHQVSIVTPSGVTLCLNVESPHVEGQQAVAAIRKDGGDDVDATHGMLIFARVTLNDSGEISLQGGEGIGTVTRKGIGLPTGSPAINRTPRHTIETAVREAIGPTRGAQVEIFAPEGVLRAQKTYNARLGILGGISIIGTTGIVTPMSEESWKRSLSLELEIKRAAGLERVVLVPGNHGERFVREQMGIDPQMVVTMSNFVGYMIEEAVRLGFRQIVLIGHPGKLIKIAAGIFHTHSHIADARMETLVAHLALLGAPLPLLTLVSECDTTEAAMEHIDAWGYQRLYNHLAERICQRVLEMLRFTQQPPTCDAVLFSFDNQVLGSSRPLAAIARELTC.

It belongs to the CbiD family.

The catalysed reaction is Co-precorrin-5B + S-adenosyl-L-methionine = Co-precorrin-6A + S-adenosyl-L-homocysteine. It participates in cofactor biosynthesis; adenosylcobalamin biosynthesis; cob(II)yrinate a,c-diamide from sirohydrochlorin (anaerobic route): step 6/10. In terms of biological role, catalyzes the methylation of C-1 in cobalt-precorrin-5B to form cobalt-precorrin-6A. The sequence is that of Cobalt-precorrin-5B C(1)-methyltransferase from Klebsiella pneumoniae subsp. pneumoniae (strain ATCC 700721 / MGH 78578).